A 303-amino-acid chain; its full sequence is uncharacterized protein (303 aa).

A Phosphoserine modification is found at S63.

This sequence belongs to the HAD-like hydrolase superfamily.

The protein resides in the cytoplasm. It is found in the nucleus. This is an uncharacterized protein from Schizosaccharomyces pombe (strain 972 / ATCC 24843) (Fission yeast).